Here is a 250-residue protein sequence, read N- to C-terminus: Ribonuclease PH (250 aa).

Phosphate is bound by residues arginine 86 and 124–126 (GTR).

Belongs to the RNase PH family. In terms of assembly, homohexameric ring arranged as a trimer of dimers.

The enzyme catalyses tRNA(n+1) + phosphate = tRNA(n) + a ribonucleoside 5'-diphosphate. Its function is as follows. Phosphorolytic 3'-5' exoribonuclease that plays an important role in tRNA 3'-end maturation. Removes nucleotide residues following the 3'-CCA terminus of tRNAs; can also add nucleotides to the ends of RNA molecules by using nucleoside diphosphates as substrates, but this may not be physiologically important. Probably plays a role in initiation of 16S rRNA degradation (leading to ribosome degradation) during starvation. This chain is Ribonuclease PH, found in Exiguobacterium sibiricum (strain DSM 17290 / CCUG 55495 / CIP 109462 / JCM 13490 / 255-15).